The primary structure comprises 150 residues: Ribosomal RNA large subunit methyltransferase H (150 aa).

S-adenosyl-L-methionine is bound by residues Leu-71, Gly-100, and 118 to 123; that span reads FSQMTF.

The protein belongs to the RNA methyltransferase RlmH family. In terms of assembly, homodimer.

The protein localises to the cytoplasm. It carries out the reaction pseudouridine(1915) in 23S rRNA + S-adenosyl-L-methionine = N(3)-methylpseudouridine(1915) in 23S rRNA + S-adenosyl-L-homocysteine + H(+). Specifically methylates the pseudouridine at position 1915 (m3Psi1915) in 23S rRNA. This is Ribosomal RNA large subunit methyltransferase H from Mycoplasmopsis agalactiae (strain NCTC 10123 / CIP 59.7 / PG2) (Mycoplasma agalactiae).